The chain runs to 965 residues: Aminopeptidase N (965 aa).

The Cytoplasmic portion of the chain corresponds to 2 to 8; sequence AKGFYIS. The chain crosses the membrane as a helical; Signal-anchor for type II membrane protein span at residues 9 to 32; that stretch reads KTLGILGILLGVAAVCTIIALSVV. A cytosolic Ser/Thr-rich junction region spans residues 33–68; that stretch reads YAQEKNRNAENSAIAPTLPGSTSATTSTTNPAIDES. Residues 33–965 lie on the Extracellular side of the membrane; sequence YAQEKNRNAE…VVLKWFTENS (933 aa). Residues 44–68 form a disordered region; sequence SAIAPTLPGSTSATTSTTNPAIDES. The segment covering 47 to 64 has biased composition (low complexity); sequence APTLPGSTSATTSTTNPA. Residues 69-965 form a metalloprotease region; the sequence is KPWNQYRLPK…VVLKWFTENS (897 aa). N-linked (GlcNAc...) asparagine glycosylation is found at Asn114 and Asn128. At Tyr176 the chain carries Sulfotyrosine. Residues Asn234, Asn242, and Asn264 are each glycosylated (N-linked (GlcNAc...) asparagine). Residue 351–355 participates in substrate binding; the sequence is GAMEN. Residue His387 coordinates Zn(2+). Glu388 serves as the catalytic Proton acceptor. Zn(2+) is bound by residues His391 and Glu410. 3 N-linked (GlcNAc...) asparagine glycosylation sites follow: Asn555, Asn606, and Asn624. Cysteines 760 and 767 form a disulfide. Residue Asn780 is glycosylated (N-linked (GlcNAc...) asparagine). An intrachain disulfide couples Cys797 to Cys833. Tyr852 bears the Phosphotyrosine mark.

This sequence belongs to the peptidase M1 family. Homodimer. Interacts with SLC6A19. The cofactor is Zn(2+). In terms of processing, sulfated. N- and O-glycosylated. Post-translationally, may undergo proteolysis and give rise to a soluble form. As to expression, widely distributed throughout the CNS. Particularly abundant in kidney and intestinal microvilli, also detected in lung and liver. Weakly expressed in heart and aorta.

The protein localises to the cell membrane. The catalysed reaction is Release of an N-terminal amino acid, Xaa-|-Yaa- from a peptide, amide or arylamide. Xaa is preferably Ala, but may be most amino acids including Pro (slow action). When a terminal hydrophobic residue is followed by a prolyl residue, the two may be released as an intact Xaa-Pro dipeptide.. Broad specificity aminopeptidase which plays a role in the final digestion of peptides generated from hydrolysis of proteins by gastric and pancreatic proteases. Also involved in the processing of various peptides including peptide hormones, such as angiotensin III and IV, neuropeptides, and chemokines. May also be involved the cleavage of peptides bound to major histocompatibility complex class II molecules of antigen presenting cells. May have a role in angiogenesis and promote cholesterol crystallization. May have a role in amino acid transport by acting as binding partner of amino acid transporter SLC6A19 and regulating its activity. The protein is Aminopeptidase N (Anpep) of Rattus norvegicus (Rat).